A 232-amino-acid polypeptide reads, in one-letter code: tRNA (guanine-N(1)-)-methyltransferase (232 aa).

S-adenosyl-L-methionine is bound by residues Gly111 and 131–136 (IGDYIL).

This sequence belongs to the RNA methyltransferase TrmD family. As to quaternary structure, homodimer.

It is found in the cytoplasm. It catalyses the reaction guanosine(37) in tRNA + S-adenosyl-L-methionine = N(1)-methylguanosine(37) in tRNA + S-adenosyl-L-homocysteine + H(+). Functionally, specifically methylates guanosine-37 in various tRNAs. This is tRNA (guanine-N(1)-)-methyltransferase from Bartonella bacilliformis (strain ATCC 35685 / KC583 / Herrer 020/F12,63).